The primary structure comprises 230 residues: Ureidoacrylate amidohydrolase RutB (230 aa).

The Proton acceptor role is filled by Asp24. Lys133 is an active-site residue. The Nucleophile role is filled by Cys166.

This sequence belongs to the isochorismatase family. RutB subfamily.

It catalyses the reaction (Z)-3-ureidoacrylate + H2O + H(+) = (Z)-3-aminoacrylate + NH4(+) + CO2. The enzyme catalyses (Z)-3-ureidoacrylate + H2O = (Z)-3-aminoacrylate + carbamate + H(+). It carries out the reaction (Z)-2-methylureidoacrylate + H2O + H(+) = (Z)-2-methylaminoacrylate + NH4(+) + CO2. In terms of biological role, hydrolyzes ureidoacrylate to form aminoacrylate and carbamate. The carbamate hydrolyzes spontaneously, thereby releasing one of the nitrogen atoms of the pyrimidine ring as ammonia and one of its carbon atoms as CO2. This Escherichia coli (strain K12 / MC4100 / BW2952) protein is Ureidoacrylate amidohydrolase RutB.